A 142-amino-acid chain; its full sequence is Type II secretion system core protein G (142 aa).

The propeptide at 1–8 (MRRQSQRG) is leader sequence. Residue Phe9 is modified to N-methylphenylalanine. Residues 9–29 (FTLLEIMVVIVIMGILASLVV) traverse the membrane as a helical segment. The disordered stretch occupies residues 122–142 (SGQDGVPGTDDDIGNWTLSKK).

This sequence belongs to the GSP G family. As to quaternary structure, type II secretion system is composed of four main components: the outer membrane complex, the inner membrane complex, the cytoplasmic secretion ATPase and the periplasm-spanning pseudopilus. Forms homomultimers. Cleaved by the prepilin peptidase. Post-translationally, methylated by prepilin peptidase at the amino group of the N-terminal phenylalanine once the leader sequence is cleaved.

It is found in the cell inner membrane. In terms of biological role, core component of the type II secretion system required for the energy-dependent secretion of extracellular factors such as proteases and toxins from the periplasm. Pseudopilin (pilin-like) protein that polymerizes to form the pseudopilus. Further polymerization triggers pseudopilus growth. This Klebsiella michiganensis (strain ATCC 8724 / DSM 4798 / JCM 20051 / NBRC 3318 / NRRL B-199 / KCTC 1686 / BUCSAV 143 / CCM 1901) protein is Type II secretion system core protein G.